The chain runs to 649 residues: Arylsulfatase (649 aa).

The signal sequence occupies residues 1–22 (MLQRLVVALCLLGFAALTAAAA). Ca(2+) is bound by residues D34 and D35. Residue N41 is glycosylated (N-linked (GlcNAc...) asparagine). C72 is a Ca(2+) binding site. C72 functions as the Nucleophile in the catalytic mechanism. 3-oxoalanine (Cys) is present on C72. N89, N224, and N279 each carry an N-linked (GlcNAc...) asparagine glycan. Positions 324 and 325 each coordinate Ca(2+). N-linked (GlcNAc...) asparagine glycosylation is found at N445, N489, and N531.

This sequence belongs to the sulfatase family. The cofactor is Ca(2+). Post-translationally, the conversion to 3-oxoalanine (also known as C-formylglycine, FGly), of a serine or cysteine residue in prokaryotes and of a cysteine residue in eukaryotes, is critical for catalytic activity.

Its subcellular location is the periplasm. It catalyses the reaction an aryl sulfate + H2O = a phenol + sulfate + H(+). Its activity is regulated as follows. Inhibited by Na(3)BO(3) and KCN. No inhibition by sodium dodecyl sulfate, even at high concentration. Functionally, is commonly produced by soil microorganisms and plays an important role in the mineralization of sulfates. This Volvox carteri (Green alga) protein is Arylsulfatase.